We begin with the raw amino-acid sequence, 465 residues long: Spermidine/putrescine import ATP-binding protein PotA (465 aa).

Residues 1 to 18 (MTATSGARTSDARTSGAR) are compositionally biased toward polar residues. The interval 1–21 (MTATSGARTSDARTSGARTSD) is disordered. The ABC transporter domain maps to 30–264 (IELVGVAKDY…PRTRFVAGFI (235 aa)). 66-73 (GPSGCGKS) is an ATP binding site.

Belongs to the ABC transporter superfamily. Spermidine/putrescine importer (TC 3.A.1.11.1) family. As to quaternary structure, the complex is composed of two ATP-binding proteins (PotA), two transmembrane proteins (PotB and PotC) and a solute-binding protein (PotD).

It localises to the cell membrane. It catalyses the reaction ATP + H2O + polyamine-[polyamine-binding protein]Side 1 = ADP + phosphate + polyamineSide 2 + [polyamine-binding protein]Side 1.. In terms of biological role, part of the ABC transporter complex PotABCD involved in spermidine/putrescine import. Responsible for energy coupling to the transport system. The protein is Spermidine/putrescine import ATP-binding protein PotA of Frankia alni (strain DSM 45986 / CECT 9034 / ACN14a).